A 401-amino-acid chain; its full sequence is Probable inactive purple acid phosphatase 14 (401 aa).

The N-terminal stretch at 1–30 is a signal peptide; sequence MEETRRRFVISSVLSVSLIYLCLSTCHVSA. Residue Asn79 is glycosylated (N-linked (GlcNAc...) asparagine). A substrate-binding site is contributed by Asn197. Residue Asn197 coordinates Zn(2+). Asn246 carries N-linked (GlcNAc...) asparagine glycosylation. Residue His256 participates in Zn(2+) binding. An N-linked (GlcNAc...) asparagine glycan is attached at Asn266. Residue His305 coordinates Zn(2+). 305 to 307 provides a ligand contact to substrate; it reads HDH. A Fe cation-binding site is contributed by His307. 2 N-linked (GlcNAc...) asparagine glycosylation sites follow: Asn371 and Asn384.

The protein belongs to the metallophosphoesterase superfamily. Purple acid phosphatase family. Homodimer. Requires Fe cation as cofactor. It depends on Zn(2+) as a cofactor. As to expression, specifically expressed in flowers.

It localises to the secreted. The protein is Probable inactive purple acid phosphatase 14 (PAP14) of Arabidopsis thaliana (Mouse-ear cress).